An 829-amino-acid chain; its full sequence is Protein SEY1 homolog 2 (829 aa).

The interval Met1 to Pro21 is disordered. The Cytoplasmic segment spans residues Met1–Gln728. Residues Gly83 to Pro305 enclose the GB1/RHD3-type G domain. Gly93 to Ser100 lines the GTP pocket. Coiled-coil stretches lie at residues Lys372–Ser396 and Asp576–Leu596. The chain crosses the membrane as a helical span at residues Ile729–Leu749. The Lumenal segment spans residues Thr750–Pro752. Residues Leu753–Leu773 form a helical membrane-spanning segment. The Cytoplasmic segment spans residues Gly774–Lys829.

Belongs to the TRAFAC class dynamin-like GTPase superfamily. GB1/RHD3 GTPase family. RHD3 subfamily.

Its subcellular location is the endoplasmic reticulum membrane. Probable GTP-binding protein that may be involved in cell development. The protein is Protein SEY1 homolog 2 of Entamoeba dispar (strain ATCC PRA-260 / SAW760).